The chain runs to 87 residues: Phosphocarrier protein HPr (87 aa).

The 87-residue stretch at 1–87 (MEKIFKVTSD…ETMKNEGLGE (87 aa)) folds into the HPr domain. The Pros-phosphohistidine intermediate; alternate role is filled by His-14. Position 14 is a tele-phosphohistidine; alternate (His-14). Phosphoserine; by HPrK/P is present on Ser-45.

The protein belongs to the HPr family. Post-translationally, the form phosphorylated at the tele nitrogen (N(epsilon)2), instead of the expected pros nitrogen (N(delta)1), of His-14 is not able to transfer its phosphoryl group to the B.subtilis EIIA-Glc domain. This form may be inactive in PTS-catalyzed sugar transport or target an as yet unknown acceptor molecule in an alternative metabolic process.

It is found in the cytoplasm. Phosphorylation on Ser-45 inhibits the phosphoryl transfer from enzyme I to HPr. Functionally, general (non sugar-specific) component of the phosphoenolpyruvate-dependent sugar phosphotransferase system (sugar PTS). This major carbohydrate active-transport system catalyzes the phosphorylation of incoming sugar substrates concomitantly with their translocation across the cell membrane. The phosphoryl group from phosphoenolpyruvate (PEP) is transferred to the phosphoryl carrier protein HPr by enzyme I. Phospho-HPr then transfers it to the PTS EIIA domain. In terms of biological role, P-Ser-HPr interacts with the catabolite control protein A (CcpA), forming a complex that binds to DNA at the catabolite response elements cre, operator sites preceding a large number of catabolite-regulated genes. Thus, P-Ser-HPr is a corepressor in carbon catabolite repression (CCR), a mechanism that allows bacteria to coordinate and optimize the utilization of available carbon sources. P-Ser-HPr mediates glucose catabolite repression of cry4A toxin expression. The chain is Phosphocarrier protein HPr (ptsH) from Bacillus thuringiensis subsp. israelensis.